The primary structure comprises 1563 residues: Integrator complex subunit 5-like protein (1563 aa).

2 stretches are compositionally biased toward basic and acidic residues: residues 1–21 (MKEE…RNDN) and 31–44 (EDWR…KNEN). Disordered regions lie at residues 1 to 63 (MKEE…YDDD), 102 to 208 (KKSK…NITY), and 270 to 310 (NSLN…QQNP). A compositionally biased stretch (acidic residues) spans 52-63 (GDSDDDDYYDDD). Composition is skewed to low complexity over residues 109–133 (TAAT…TATA) and 141–202 (NNLL…NNNN). A helical transmembrane segment spans residues 350-370 (DSIINWSLSTLTIITRLLIIL). A compositionally biased stretch (low complexity) spans 381–398 (QQQQQQQQQQQQQQQQQQ). Disordered regions lie at residues 381–417 (QQQQ…RQPI), 466–498 (SKSS…SSKT), 637–694 (FDNN…DNSS), and 784–828 (ILNN…SQEI). The segment covering 405–414 (FPPPPPPPLR) has biased composition (pro residues). Low complexity-rich tracts occupy residues 468–496 (SSSS…SSSS), 639–686 (NNNN…NNNN), and 786–824 (NNNN…QQQQ). Residues 877–897 (IIIKLISLIGMDSIYSSLIIL) form a helical membrane-spanning segment. Disordered regions lie at residues 1154 to 1173 (SGNF…DEYG) and 1268 to 1303 (KQRM…DQNE). The span at 1160–1172 (GDDDDDEYGDDEY) shows a compositional bias: acidic residues. Positions 1277-1288 (SIQQNGNINNEQ) are enriched in low complexity. Positions 1289 to 1303 (QQEEDDNDDADDQNE) are enriched in acidic residues.

This sequence belongs to the Integrator subunit 5 family. In terms of assembly, component of the Integrator complex. The core complex associates with protein phosphatase 2A subunits, to form the Integrator-PP2A (INTAC) complex.

It is found in the nucleus. The protein localises to the cytoplasm. The protein resides in the nucleus membrane. In terms of biological role, component of the integrator complex, a multiprotein complex that terminates RNA polymerase II (Pol II) transcription in the promoter-proximal region of genes. The integrator complex provides a quality checkpoint during transcription elongation by driving premature transcription termination of transcripts that are unfavorably configured for transcriptional elongation: the complex terminates transcription by (1) catalyzing dephosphorylation of the C-terminal domain (CTD) of Pol II subunit polr2a, (2) degrading the exiting nascent RNA transcript via endonuclease activity and (3) promoting the release of Pol II from bound DNA. The integrator complex is also involved in terminating the synthesis of non-coding Pol II transcripts, such as enhancer RNAs (eRNAs), small nuclear RNAs (snRNAs), telomerase RNAs and long non-coding RNAs (lncRNAs). This chain is Integrator complex subunit 5-like protein, found in Dictyostelium discoideum (Social amoeba).